A 485-amino-acid polypeptide reads, in one-letter code: Trk system potassium uptake protein TrkG (485 aa).

Residues 1-5 (MNTSH) lie on the Cytoplasmic side of the membrane. The helical transmembrane segment at 6-32 (VRVVTHMCGFLVWLYSLSMLPPMVVAL) threads the bilayer. Over 33 to 38 (FYKEKS) the chain is Periplasmic. Residues 39–60 (LFVFFITFVIFFCIGGGAWYTT) form a helical membrane-spanning segment. At 61 to 68 (KKSGIQLR) the chain is on the cytoplasmic side. Residues 69-93 (TRDGFIIIVMFWILFSVISAFPLWI) traverse the membrane as a helical segment. The helical; Pore-forming intramembrane region spans 101–112 (FIDALFEGVSGI). Residues 113–118 (TTTGAT) lie within the membrane without spanning it. Positions 113–118 (TTTGAT) are selectivity filter part 1. Positions 114 and 115 each coordinate K(+). The Periplasmic portion of the chain corresponds to 119–127 (VIDDVSSLP). Residues 128 to 153 (RAYLYYRSQLNFIGGLGVIVLAVAVL) form a helical membrane-spanning segment. The Cytoplasmic portion of the chain corresponds to 154-180 (PLLGIGGAKLYQSEMPGPFKDDKLTPR). Residues 181 to 205 (LADTSRTLWITYSLLGIACIVCYRL) form a helical membrane-spanning segment. The Periplasmic portion of the chain corresponds to 206-208 (AGM). Residue Pro209 is an intramembrane region. Positions 210–221 (LFDAICHGISTV) form an intramembrane region, helical; Pore-forming. An intramembrane segment occupies 222-227 (SLGGFS). Residues 222–227 (SLGGFS) form a selectivity filter part 2 region. K(+) contacts are provided by Leu223 and Gly224. Topologically, residues 228-237 (THSESIGYFN) are periplasmic. The segment at residues 238-253 (NYLVELVAGSFSLLSA) is an intramembrane region (helical). Residues 277–297 (LRFFLLIALGVIIVTSFQVWH) traverse the membrane as a helical segment. The helical; Pore-forming intramembrane region spans 303–318 (LHGSFIHSFFLASSML). The stretch at 319 to 324 (TDNGLA) is an intramembrane region. The segment at 319 to 324 (TDNGLA) is selectivity filter part 3. The K(+) site is built by Asp320 and Asn321. The Periplasmic portion of the chain corresponds to 325–332 (TQDYASWP). The segment at residues 333–344 (THTIVFLLLSSF) is an intramembrane region (helical). The note=Loop between two helices intramembrane region spans 345 to 357 (FGGCIGSTCGGIK). The chain crosses the membrane as a helical span at residues 392–419 (TDRVMRSVWSFFFLYTLFTVFFILVLNG). The Periplasmic segment spans residues 420–421 (MG). The stretch at 422-423 (YD) is an intramembrane region. The segment at residues 424–434 (FLTSFATVAAC) is an intramembrane region (helical; Pore-forming). Residues 435-441 (INNMGLG) lie within the membrane without spanning it. The interval 436–441 (NNMGLG) is selectivity filter part 4. 2 residues coordinate K(+): Asn437 and Met438. Topologically, residues 442-453 (FGATASSFGVLN) are periplasmic. Positions 454–465 (DIAKCLMCIAMI) form an intramembrane region, helical.

Belongs to the TrkH potassium transport family.

The protein localises to the cell inner membrane. Low-affinity potassium transport system. Interacts with Trk system potassium uptake protein TrkA. Requires TrkE (sapD) for maximal transport activity, low activity is seen in its absence; no further stimulation is seen with SapF. Transport in the absence of SapD is dependent on a high membrane potential and a high cytoplasmic ATP concentration, suggesting this protein may be able to interact with other ATP-binding proteins. Can transport potassium and rubidium. The chain is Trk system potassium uptake protein TrkG (trkG) from Escherichia coli (strain K12).